Consider the following 974-residue polypeptide: Kinase-interacting protein 1 (974 aa).

In terms of domain architecture, NAB spans 10-90 (YSWWAASHIR…ERYDHLSKEL (81 aa)). A disordered region spans residues 151-170 (STASKQKQGKQSSKIEDAAK). The stretch at 173 to 423 (LSKNEAIEEI…DVVNQNSCLR (251 aa)) forms a coiled coil. Positions 586 to 614 (AQPTPAEKGDEKVSAQSGNTSVYETHTQK) are disordered. Positions 599–610 (SAQSGNTSVYET) are enriched in polar residues. Positions 641 to 697 (NEYTAILKNYKEVTKKLSDIEKKDRDTEFELTLQTRELKSAIAKRDEEIHNLRQKLS) form a coiled coil. Residues 714-740 (LLDPSDPSSARGLKPEDLPQIKDGDDE) are disordered. Residues 726-736 (LKPEDLPQIKD) are compositionally biased toward basic and acidic residues. Coiled coils occupy residues 784 to 807 (HQIQ…RDKE) and 882 to 905 (AAKF…ELEA).

Homodimer or homooligomer. Interacts with PRK1. Phosphorylated by PRK1. As to expression, expressed in mature pollen grains and pollen tubes, but not in style, ovary, petal, leaf, root or sepal.

It is found in the cytoplasm. In terms of biological role, probably involved in the receptor-like kinase-mediated signal transduction pathway. In Petunia integrifolia (Violet-flowered petunia), this protein is Kinase-interacting protein 1.